The chain runs to 427 residues: Serine--tRNA ligase (427 aa).

231–233 (TAE) is a binding site for L-serine. 262-264 (RSE) contacts ATP. Glu285 provides a ligand contact to L-serine. 349–352 (EISS) lines the ATP pocket. Position 385 (Ser385) interacts with L-serine.

This sequence belongs to the class-II aminoacyl-tRNA synthetase family. Type-1 seryl-tRNA synthetase subfamily. Homodimer. The tRNA molecule binds across the dimer.

The protein resides in the cytoplasm. The enzyme catalyses tRNA(Ser) + L-serine + ATP = L-seryl-tRNA(Ser) + AMP + diphosphate + H(+). It carries out the reaction tRNA(Sec) + L-serine + ATP = L-seryl-tRNA(Sec) + AMP + diphosphate + H(+). It participates in aminoacyl-tRNA biosynthesis; selenocysteinyl-tRNA(Sec) biosynthesis; L-seryl-tRNA(Sec) from L-serine and tRNA(Sec): step 1/1. Functionally, catalyzes the attachment of serine to tRNA(Ser). Is also able to aminoacylate tRNA(Sec) with serine, to form the misacylated tRNA L-seryl-tRNA(Sec), which will be further converted into selenocysteinyl-tRNA(Sec). This is Serine--tRNA ligase from Rhizobium rhizogenes (strain K84 / ATCC BAA-868) (Agrobacterium radiobacter).